We begin with the raw amino-acid sequence, 376 residues long: METDGKTLRRGWTTGTCAAAATKAACAALLTGEFPYPVDVELPSGARPAFSLATEEKGENFARAGVVKDAGDDPDVTHGALIESTVRRGEPGSGITFRAGKGVGIITRPGLPLPPGEPAINPVPRRMIETAIREVAGENADFEVEISVRDGEKLAEKTLNGRLGILGGISILGTTGVVIPFSCSAWIHSIWRGIDVARATGCTHVLGATGNTSEKAGQAVYDLPETALIDMGDFIGGMLKYLRSHPVERVTIAGGVAKMTKLAQGMLDVHSKKGLADLEALAVLAAEAGGDDNLAVAIRQANMVAHAFQLAESVGIDLGAVVAEKAWVTAAAALKTPAIALDILVFDRQGALKGRTTSTPSHQPAPSSFGDRNRRT.

The disordered stretch occupies residues 353 to 376 (KGRTTSTPSHQPAPSSFGDRNRRT). Over residues 355–366 (RTTSTPSHQPAP) the composition is skewed to polar residues.

It belongs to the CbiD family.

The enzyme catalyses Co-precorrin-5B + S-adenosyl-L-methionine = Co-precorrin-6A + S-adenosyl-L-homocysteine. The protein operates within cofactor biosynthesis; adenosylcobalamin biosynthesis; cob(II)yrinate a,c-diamide from sirohydrochlorin (anaerobic route): step 6/10. In terms of biological role, catalyzes the methylation of C-1 in cobalt-precorrin-5B to form cobalt-precorrin-6A. This is Cobalt-precorrin-5B C(1)-methyltransferase from Agrobacterium fabrum (strain C58 / ATCC 33970) (Agrobacterium tumefaciens (strain C58)).